A 304-amino-acid chain; its full sequence is Tyrosine recombinase XerD (304 aa).

Positions 1 to 92 (MKARVLAKTW…VARGLHKFAL (92 aa)) constitute a Core-binding (CB) domain. A Tyr recombinase domain is found at 113 to 298 (HLPDTLSINE…TADSLREVWR (186 aa)). Active-site residues include Arg156, Lys180, His250, Arg253, and His276. Catalysis depends on Tyr285, which acts as the O-(3'-phospho-DNA)-tyrosine intermediate.

The protein belongs to the 'phage' integrase family. XerD subfamily. As to quaternary structure, forms a cyclic heterotetrameric complex composed of two molecules of XerC and two molecules of XerD.

The protein resides in the cytoplasm. Its function is as follows. Site-specific tyrosine recombinase, which acts by catalyzing the cutting and rejoining of the recombining DNA molecules. The XerC-XerD complex is essential to convert dimers of the bacterial chromosome into monomers to permit their segregation at cell division. It also contributes to the segregational stability of plasmids. In Corynebacterium glutamicum (strain ATCC 13032 / DSM 20300 / JCM 1318 / BCRC 11384 / CCUG 27702 / LMG 3730 / NBRC 12168 / NCIMB 10025 / NRRL B-2784 / 534), this protein is Tyrosine recombinase XerD.